The following is a 1151-amino-acid chain: Ankyrin and IPT/TIG repeat-containing protein C26H5.05 (1151 aa).

3 disordered regions span residues 77-104 (NLPS…AECL), 452-511 (KSRN…ENSR), and 516-535 (QLSA…KSVE). Residues 87 to 98 (SHASSPNLSNSQ) are compositionally biased toward polar residues. Basic and acidic residues predominate over residues 452–463 (KSRNLTKSEKTG). Polar residues-rich tracts occupy residues 464–496 (KSNS…SDNP) and 517–532 (LSAS…STLK). The IPT/TIG domain occupies 658 to 739 (PLISRIIPNK…SSEAPVMFTY (82 aa)). ANK repeat units lie at residues 861 to 890 (SGRS…DVNK) and 894 to 923 (LGYT…KPDV). A disordered region spans residues 1041 to 1067 (PPPYSEFADDTTAQAGSSKRDSAISED). Residues 1058–1067 (SKRDSAISED) are compositionally biased toward basic and acidic residues. Residues 1113–1133 (MDFMLFSFWLPALLLLSIFGL) traverse the membrane as a helical segment.

Its subcellular location is the vacuole membrane. The sequence is that of Ankyrin and IPT/TIG repeat-containing protein C26H5.05 from Schizosaccharomyces pombe (strain 972 / ATCC 24843) (Fission yeast).